The primary structure comprises 126 residues: Aspartate 1-decarboxylase (126 aa).

The active-site Schiff-base intermediate with substrate; via pyruvic acid is Ser-25. Residue Ser-25 is modified to Pyruvic acid (Ser). A substrate-binding site is contributed by Thr-57. Tyr-58 (proton donor) is an active-site residue. A substrate-binding site is contributed by 73-75 (GAA).

It belongs to the PanD family. Heterooctamer of four alpha and four beta subunits. It depends on pyruvate as a cofactor. Is synthesized initially as an inactive proenzyme, which is activated by self-cleavage at a specific serine bond to produce a beta-subunit with a hydroxyl group at its C-terminus and an alpha-subunit with a pyruvoyl group at its N-terminus.

Its subcellular location is the cytoplasm. The enzyme catalyses L-aspartate + H(+) = beta-alanine + CO2. Its pathway is cofactor biosynthesis; (R)-pantothenate biosynthesis; beta-alanine from L-aspartate: step 1/1. Its function is as follows. Catalyzes the pyruvoyl-dependent decarboxylation of aspartate to produce beta-alanine. This is Aspartate 1-decarboxylase from Azotobacter vinelandii (strain DJ / ATCC BAA-1303).